The following is a 541-amino-acid chain: Eukaryotic translation initiation factor 3 subunit L (541 aa).

A PCI domain is found at 308-516; sequence TFSDILLYIQ…IHIADTKVSH (209 aa).

Belongs to the eIF-3 subunit L family. Component of the eukaryotic translation initiation factor 3 (eIF-3) complex. The eIF-3 complex interacts with pix.

The protein resides in the cytoplasm. Its function is as follows. Component of the eukaryotic translation initiation factor 3 (eIF-3) complex, which is involved in protein synthesis of a specialized repertoire of mRNAs and, together with other initiation factors, stimulates binding of mRNA and methionyl-tRNAi to the 40S ribosome. The eIF-3 complex specifically targets and initiates translation of a subset of mRNAs involved in cell proliferation. The protein is Eukaryotic translation initiation factor 3 subunit L of Drosophila pseudoobscura pseudoobscura (Fruit fly).